The following is a 208-amino-acid chain: Crossover junction endodeoxyribonuclease RuvC (208 aa).

Catalysis depends on residues aspartate 9, glutamate 70, and aspartate 143. Positions 9, 70, and 143 each coordinate Mg(2+).

The protein belongs to the RuvC family. As to quaternary structure, homodimer which binds Holliday junction (HJ) DNA. The HJ becomes 2-fold symmetrical on binding to RuvC with unstacked arms; it has a different conformation from HJ DNA in complex with RuvA. In the full resolvosome a probable DNA-RuvA(4)-RuvB(12)-RuvC(2) complex forms which resolves the HJ. Requires Mg(2+) as cofactor.

Its subcellular location is the cytoplasm. It catalyses the reaction Endonucleolytic cleavage at a junction such as a reciprocal single-stranded crossover between two homologous DNA duplexes (Holliday junction).. The RuvA-RuvB-RuvC complex processes Holliday junction (HJ) DNA during genetic recombination and DNA repair. Endonuclease that resolves HJ intermediates. Cleaves cruciform DNA by making single-stranded nicks across the HJ at symmetrical positions within the homologous arms, yielding a 5'-phosphate and a 3'-hydroxyl group; requires a central core of homology in the junction. The consensus cleavage sequence is 5'-(A/T)TT(C/G)-3'. Cleavage occurs on the 3'-side of the TT dinucleotide at the point of strand exchange. HJ branch migration catalyzed by RuvA-RuvB allows RuvC to scan DNA until it finds its consensus sequence, where it cleaves and resolves the cruciform DNA. The polypeptide is Crossover junction endodeoxyribonuclease RuvC (Leifsonia xyli subsp. xyli (strain CTCB07)).